Here is a 222-residue protein sequence, read N- to C-terminus: uncharacterized protein (222 aa).

This sequence belongs to the PhoU family.

It localises to the cytoplasm. Its function is as follows. Not known; probably involved in phosphate transport and/or metabolism. This is an uncharacterized protein from Deinococcus radiodurans (strain ATCC 13939 / DSM 20539 / JCM 16871 / CCUG 27074 / LMG 4051 / NBRC 15346 / NCIMB 9279 / VKM B-1422 / R1).